Reading from the N-terminus, the 868-residue chain is Pro-neuregulin-2, membrane-bound isoform (868 aa).

The interval 1–114 (MRQVCCSALP…AAGGMRRDPA (114 aa)) is disordered. The propeptide occupies 1–127 (MRQVCCSALP…SMLLFGVSLA (127 aa)). A compositionally biased stretch (low complexity) spans 19–75 (SSYSYSDSSSSSSSNNSSSSTSSRSSSRSSSRSSRGSTTTTSSSENSGSNSGSIFRP). N-linked (GlcNAc...) asparagine glycans are attached at residues Asn-33 and Asn-34. Residues 76 to 90 (AAPPEPRPQPQPQPR) show a composition bias toward pro residues. Low complexity predominate over residues 91-108 (SPAARRAAARSRAAAAGG). Topologically, residues 128–429 (CYSPSLKSVQ…KEAEELYQKR (302 aa)) are extracellular. Residues Asn-163, Asn-294, and Asn-362 are each glycosylated (N-linked (GlcNAc...) asparagine). The Ig-like C2-type domain maps to 253-348 (PKLKKMKSQT…RGRLHVNSVS (96 aa)). 4 disulfides stabilise this stretch: Cys-273–Cys-327, Cys-361–Cys-375, Cys-369–Cys-386, and Cys-388–Cys-397. Residues 357–398 (HARKCNETAKSYCVNGGVCYYIEGINQLSCKCPNGFFGQRCL) form the EGF-like domain. The chain crosses the membrane as a helical span at residues 430–450 (VLTITGICVALLVVGIVCVVA). Over 451–868 (YCKTKKQRRQ…TRAKQDSGPL (418 aa)) the chain is Cytoplasmic. 5 disordered regions span residues 469 to 488 (MCPA…PRLD), 516 to 553 (TFSG…SESL), 671 to 690 (LLRH…DMQR), 720 to 806 (ASPF…DGAL), and 823 to 868 (LRSD…SGPL). Over residues 518–530 (SGSHSCSPSHHCS) the composition is skewed to low complexity. Basic and acidic residues predominate over residues 538–551 (HRHESHTWSLERSE). A compositionally biased stretch (low complexity) spans 766 to 794 (LNGLAAQRARAARDSLSLSSGSGCGSASA).

The protein belongs to the neuregulin family. Interacts with ERBB3 and ERBB4. Proteolytic cleavage close to the plasma membrane on the external face leads to the release of the soluble growth factor form. Post-translationally, extensive glycosylation precedes the proteolytic cleavage. In terms of tissue distribution, expressed in most parts of the brain, especially the olfactory bulb and cerebellum where it localizes in granule and Purkinje cells. In the hippocampus, found in the granule cells of the dentate gyrus. In the basal forebrain, found in the cholinergic cells. In the hindbrain, weakly detectable in the motor trigeminal nucleus. Not detected in the hypothalamus. Also found in the liver and in the thymus. Not detected in heart, adrenal gland, or testis.

It is found in the cell membrane. The protein resides in the secreted. In terms of biological role, direct ligand for ERBB3 and ERBB4 tyrosine kinase receptors. Concomitantly recruits ERBB1 and ERBB2 coreceptors, resulting in ligand-stimulated tyrosine phosphorylation and activation of the ERBB receptors. May also promote the heterodimerization with the EGF receptor. The polypeptide is Pro-neuregulin-2, membrane-bound isoform (Nrg2) (Rattus norvegicus (Rat)).